A 449-amino-acid polypeptide reads, in one-letter code: Tubulin alpha-2B chain (449 aa).

Glutamine 11 provides a ligand contact to GTP. Lysine 40 carries the post-translational modification N6-acetyllysine. 7 residues coordinate GTP: glutamate 71, serine 140, glycine 144, threonine 145, threonine 179, asparagine 206, and asparagine 228. Glutamate 71 is a binding site for Mg(2+). Glutamate 254 is a catalytic residue.

The protein belongs to the tubulin family. Dimer of alpha and beta chains. A typical microtubule is a hollow water-filled tube with an outer diameter of 25 nm and an inner diameter of 15 nM. Alpha-beta heterodimers associate head-to-tail to form protofilaments running lengthwise along the microtubule wall with the beta-tubulin subunit facing the microtubule plus end conferring a structural polarity. Microtubules usually have 13 protofilaments but different protofilament numbers can be found in some organisms and specialized cells. The cofactor is Mg(2+). In terms of processing, acetylation of alpha chains at Lys-40 stabilizes microtubules and affects affinity and processivity of microtubule motors. This modification has a role in multiple cellular functions, ranging from cell motility, cell cycle progression or cell differentiation to intracellular trafficking and signaling.

The protein localises to the cytoplasm. It localises to the cytoskeleton. Its subcellular location is the spindle. The protein resides in the nucleus. It catalyses the reaction GTP + H2O = GDP + phosphate + H(+). In terms of biological role, tubulin is the major constituent of microtubules, a cylinder consisting of laterally associated linear protofilaments composed of alpha- and beta-tubulin heterodimers. Microtubules grow by the addition of GTP-tubulin dimers to the microtubule end, where a stabilizing cap forms. Below the cap, tubulin dimers are in GDP-bound state, owing to GTPase activity of alpha-tubulin. This is Tubulin alpha-2B chain (ALTBE) from Physarum polycephalum (Slime mold).